Reading from the N-terminus, the 275-residue chain is 4-hydroxy-tetrahydrodipicolinate reductase (275 aa).

NAD(+)-binding positions include 13–18, 108–110, and 134–137; these read GAAGKM, GTT, and APNF. The Proton donor/acceptor role is filled by His-164. Residue His-165 coordinates (S)-2,3,4,5-tetrahydrodipicolinate. Catalysis depends on Lys-168, which acts as the Proton donor. Position 174-175 (174-175) interacts with (S)-2,3,4,5-tetrahydrodipicolinate; the sequence is GT.

It belongs to the DapB family.

Its subcellular location is the cytoplasm. It catalyses the reaction (S)-2,3,4,5-tetrahydrodipicolinate + NAD(+) + H2O = (2S,4S)-4-hydroxy-2,3,4,5-tetrahydrodipicolinate + NADH + H(+). It carries out the reaction (S)-2,3,4,5-tetrahydrodipicolinate + NADP(+) + H2O = (2S,4S)-4-hydroxy-2,3,4,5-tetrahydrodipicolinate + NADPH + H(+). It participates in amino-acid biosynthesis; L-lysine biosynthesis via DAP pathway; (S)-tetrahydrodipicolinate from L-aspartate: step 4/4. Functionally, catalyzes the conversion of 4-hydroxy-tetrahydrodipicolinate (HTPA) to tetrahydrodipicolinate. The protein is 4-hydroxy-tetrahydrodipicolinate reductase of Synechocystis sp. (strain ATCC 27184 / PCC 6803 / Kazusa).